Here is a 290-residue protein sequence, read N- to C-terminus: Phosphate import ATP-binding protein PstB (290 aa).

Residues 43–285 (MSVRNLNVYY…PEHELTEAYI (243 aa)) form the ABC transporter domain. An ATP-binding site is contributed by 75 to 82 (GPSGCGKS).

This sequence belongs to the ABC transporter superfamily. Phosphate importer (TC 3.A.1.7) family. The complex is composed of two ATP-binding proteins (PstB), two transmembrane proteins (PstC and PstA) and a solute-binding protein (PstS).

It localises to the cell inner membrane. It catalyses the reaction phosphate(out) + ATP + H2O = ADP + 2 phosphate(in) + H(+). Part of the ABC transporter complex PstSACB involved in phosphate import. Responsible for energy coupling to the transport system. This is Phosphate import ATP-binding protein PstB from Pseudoalteromonas atlantica (strain T6c / ATCC BAA-1087).